Consider the following 1273-residue polypeptide: Protein sax-3 (1273 aa).

The signal sequence occupies residues 1 to 23; that stretch reads MFNRKTLLCTILLVLQAVIRSFC. Ig-like C2-type domains are found at residues 31–127, 133–222, 227–312, 317–411, and 425–511; these read PVII…GSLK, EDFR…ARLS, PKFE…AHLR, PSFQ…LKVT, and PTIE…ASLT. Cystine bridges form between Cys-52–Cys-110, Cys-154–Cys-205, Cys-248–Cys-296, Cys-338–Cys-393, and Cys-446–Cys-495. Fibronectin type-III domains lie at 533–628, 653–750, and 755–849; these read SPTQ…TSKP, QLIK…TAEA, and PPED…MNQD. Residues 874–894 traverse the membrane as a helical segment; it reads VPVIVIVAILIIFVVIIIAYC. A disordered region spans residues 1033–1273; sequence APAMPTNPVP…NNGIVTQEQT (241 aa). Residues 1037-1046 are compositionally biased toward pro residues; sequence PTNPVPPEPP. Positions 1096 to 1105 are enriched in polar residues; it reads QLHSSDGTGS. The segment covering 1106 to 1115 has biased composition (basic and acidic residues); sequence SKERTGERRT. The segment covering 1125 to 1136 has biased composition (pro residues); sequence IPPPPSNPPPPG. The span at 1145–1156 shows a compositional bias: polar residues; sequence QTATRRQLNRGS. Residues 1207 to 1222 are compositionally biased toward acidic residues; that stretch reads MDDDGGSSEADGENSE. The segment covering 1240 to 1273 has biased composition (polar residues); that stretch reads SASTLAHSCYGTNGTAQRFRSIPRNNGIVTQEQT.

The protein belongs to the immunoglobulin superfamily. ROBO/SAX3 family. In terms of tissue distribution, expressed in the AVG interneuron and the male-specific sensory neuron HOA.

Its subcellular location is the membrane. Functionally, required to confine migrating sex myoblasts to the ventral muscle quadrants during their migration through the body and for multiple aspects of sensory, motor, and interneuron axon guidance. The sequence is that of Protein sax-3 from Caenorhabditis elegans.